Reading from the N-terminus, the 1363-residue chain is DNA-directed RNA polymerase subunit beta' (1363 aa).

Positions Met1–Asn39 are disordered. Positions Gly14–Ala24 are enriched in low complexity. Cys248, Cys315, Cys322, and Cys325 together coordinate Zn(2+).

It belongs to the RNA polymerase beta' chain family. RpoC2 subfamily. In cyanobacteria the RNAP catalytic core is composed of 2 alpha, 1 beta, 1 beta', 1 gamma and 1 omega subunit. When a sigma factor is associated with the core the holoenzyme is formed, which can initiate transcription. Requires Zn(2+) as cofactor.

The enzyme catalyses RNA(n) + a ribonucleoside 5'-triphosphate = RNA(n+1) + diphosphate. Its function is as follows. DNA-dependent RNA polymerase catalyzes the transcription of DNA into RNA using the four ribonucleoside triphosphates as substrates. This is DNA-directed RNA polymerase subunit beta' from Synechococcus sp. (strain WH7803).